Here is a 486-residue protein sequence, read N- to C-terminus: Glutamate--tRNA ligase (486 aa).

The 'HIGH' region motif lies at Pro-12–Leu-22. Positions Lys-256–Arg-260 match the 'KMSKS' region motif. Lys-259 lines the ATP pocket.

Belongs to the class-I aminoacyl-tRNA synthetase family. Glutamate--tRNA ligase type 1 subfamily. As to quaternary structure, monomer.

The protein localises to the cytoplasm. It carries out the reaction tRNA(Glu) + L-glutamate + ATP = L-glutamyl-tRNA(Glu) + AMP + diphosphate. Functionally, catalyzes the attachment of glutamate to tRNA(Glu) in a two-step reaction: glutamate is first activated by ATP to form Glu-AMP and then transferred to the acceptor end of tRNA(Glu). This chain is Glutamate--tRNA ligase, found in Mycolicibacterium smegmatis (strain ATCC 700084 / mc(2)155) (Mycobacterium smegmatis).